The chain runs to 188 residues: Peptidyl-tRNA hydrolase (188 aa).

Tyr14 serves as a coordination point for tRNA. His19 serves as the catalytic Proton acceptor. Residues Tyr64, Asn66, and Asn112 each coordinate tRNA.

This sequence belongs to the PTH family. In terms of assembly, monomer.

Its subcellular location is the cytoplasm. The catalysed reaction is an N-acyl-L-alpha-aminoacyl-tRNA + H2O = an N-acyl-L-amino acid + a tRNA + H(+). In terms of biological role, hydrolyzes ribosome-free peptidyl-tRNAs (with 1 or more amino acids incorporated), which drop off the ribosome during protein synthesis, or as a result of ribosome stalling. Catalyzes the release of premature peptidyl moieties from peptidyl-tRNA molecules trapped in stalled 50S ribosomal subunits, and thus maintains levels of free tRNAs and 50S ribosomes. This is Peptidyl-tRNA hydrolase from Bacillus licheniformis (strain ATCC 14580 / DSM 13 / JCM 2505 / CCUG 7422 / NBRC 12200 / NCIMB 9375 / NCTC 10341 / NRRL NRS-1264 / Gibson 46).